Consider the following 245-residue polypeptide: UDP-N-acetyl-D-mannosaminuronic acid transferase (245 aa).

Belongs to the glycosyltransferase 26 family.

It carries out the reaction UDP-N-acetyl-alpha-D-mannosaminouronate + N-acetyl-alpha-D-glucosaminyl-di-trans,octa-cis-undecaprenyl diphosphate = beta-D-ManNAcA-(1-&gt;4)-alpha-D-GlcNAc-di-trans,octa-cis-undecaprenyl diphosphate + UDP + H(+). The protein operates within bacterial outer membrane biogenesis; enterobacterial common antigen biosynthesis. In terms of biological role, catalyzes the synthesis of Und-PP-GlcNAc-ManNAcA (Lipid II), the second lipid-linked intermediate involved in enterobacterial common antigen (ECA) synthesis. The chain is UDP-N-acetyl-D-mannosaminuronic acid transferase from Photorhabdus laumondii subsp. laumondii (strain DSM 15139 / CIP 105565 / TT01) (Photorhabdus luminescens subsp. laumondii).